We begin with the raw amino-acid sequence, 354 residues long: Protein REDOX 1 (354 aa).

Cys-44 lines the Zn(2+) pocket. 45 to 49 (HSDLH) provides a ligand contact to NAD(+). Zn(2+) contacts are provided by His-66, Cys-97, Cys-100, Cys-103, and Cys-111. NAD(+) is bound by residues 185–190 (GLGGLG), Lys-214, 271–273 (VGA), 295–297 (SAV), and Arg-340.

It belongs to the zinc-containing alcohol dehydrogenase family. The cofactor is Zn(2+). Expressed in leaf epidermis.

The enzyme catalyses 3,17-didehydrostemmadenine + NADPH + H2O = (16S)-deshydroxymethyl-stemmadenine + formate + NADP(+). The catalysed reaction is 3,17-didehydrostemmadenine + NADPH + H2O = (16R)-deshydroxymethyl-stemmadenine + formate + NADP(+). It catalyses the reaction 17-dehydrostemmadenine + NADP(+) = 3,17-didehydrostemmadenine + NADPH. It functions in the pathway alkaloid biosynthesis. In terms of biological role, component of iboga and aspidosperma monoterpenoid indole alkaloids (MIAs, e.g. tabersonine and catharanthine) biosynthesis pathway from 19E-geissoschizine. Catalyzes the first oxidation step of the unstable intermediate product resulting from the reaction triggered by the geissoschizine oxidase (GO) in the stemmadenine biosynthesis process from 19E-geissoschizine. The protein is Protein REDOX 1 of Catharanthus roseus (Madagascar periwinkle).